The chain runs to 282 residues: Undecaprenyl-diphosphatase (282 aa).

8 helical membrane passes run 1–21 (MTLI…FLPI), 39–59 (PGAA…MLYF), 85–105 (AKMG…GLLF), 115–135 (SLYW…LAEW), 153–173 (IGWK…IPGS), 193–213 (AARF…AFEL), 229–249 (NLAV…AFLL), and 259–279 (IFIA…GGGT).

This sequence belongs to the UppP family.

The protein localises to the cell inner membrane. It catalyses the reaction di-trans,octa-cis-undecaprenyl diphosphate + H2O = di-trans,octa-cis-undecaprenyl phosphate + phosphate + H(+). Its function is as follows. Catalyzes the dephosphorylation of undecaprenyl diphosphate (UPP). Confers resistance to bacitracin. This chain is Undecaprenyl-diphosphatase, found in Chlorobium luteolum (strain DSM 273 / BCRC 81028 / 2530) (Pelodictyon luteolum).